Here is a 307-residue protein sequence, read N- to C-terminus: MPRTENDTWDLASSVGATATMVAAARAVATRAEDPVIDDPYAEPLVRAVGIDFFAKLASGELTPEDLDVSGDESPVGMSRFADGMAARTRFFDDFFTDACAAGVRQAVILASGLDARGYRLTWPEGMTLFEIDQPEVIEFKRTTLAGLGATPSTHLATVAIDLREDWPTALRDAGFDPSVPTAWIAEGLLGYLPPDAQDRLLDTIGELSASGSRLAVESVPSQQSADQDEMREKMKDSTDRWRSHGFDLDFSELVFLGERANVPDYLRERGWAVTATPTNDLLTRYGLAPLDTDEGFAEVVYVNAAR.

Residues aspartate 133 and 162–163 (DL) each bind S-adenosyl-L-methionine. Positions 213–234 (SRLAVESVPSQQSADQDEMREK) are disordered.

It belongs to the UPF0677 family.

Functionally, exhibits S-adenosyl-L-methionine-dependent methyltransferase activity. In Mycolicibacterium gilvum (strain PYR-GCK) (Mycobacterium gilvum (strain PYR-GCK)), this protein is Putative S-adenosyl-L-methionine-dependent methyltransferase Mflv_5023.